The following is a 108-amino-acid chain: MQITDVRIKLLNIDNRLKAIASVTFDDEIVIHDIKVIEGEEGLFLAMPSRKVGNDRYRDIAHPISSPAREKIETAVINKYNEEFEKQSSVETEPVTEENMETAENENE.

A disordered region spans residues 84–108; sequence FEKQSSVETEPVTEENMETAENENE. The span at 94–108 shows a compositional bias: acidic residues; that stretch reads PVTEENMETAENENE.

This sequence belongs to the SpoVG family.

Its function is as follows. Could be involved in septation. The chain is Putative septation protein SpoVG from Finegoldia magna (strain ATCC 29328 / DSM 20472 / WAL 2508) (Peptostreptococcus magnus).